A 174-amino-acid chain; its full sequence is Inactive signal peptidase IA (174 aa).

Over 1–7 (MKKVVKY) the chain is Cytoplasmic. Residues 8–28 (LISLILAIIIVLFVQTFVIVG) form a helical membrane-spanning segment. Residues 29 to 174 (HVIPNNDMSP…FSKWTVQFKS (146 aa)) are Extracellular-facing.

It belongs to the peptidase S26 family.

Its subcellular location is the cell membrane. Functionally, catalytically inactive. This is Inactive signal peptidase IA (spsA) from Staphylococcus aureus (strain COL).